Here is a 221-residue protein sequence, read N- to C-terminus: MPKGLKGKMVGREKKVIHPYSRKAAQITRESHKQDKKERLKTEKALRLNLIGDKLQWFHSHLDMKKTRYSKKDACELVERYLDRFSSELEQIELQNSIKDRQGRRHHSREAVIKQTLERERQQYEGYGFEIPDILDSNTLQTFREWDFDLKKLPNIKMRKLCADDAVPKKRKQKNILNIEKDLGELELSGPTGATTDGKLEPASESSDTDEEMTPVPVSPH.

Positions Glu-180–His-221 are disordered.

It belongs to the TMA16 family. Associates with pre-60S ribosomal particles.

The protein localises to the nucleus. Its function is as follows. Involved in the biogenesis of the 60S ribosomal subunit in the nucleus. This Mus musculus (Mouse) protein is Translation machinery-associated protein 16 (Tma16).